A 396-amino-acid polypeptide reads, in one-letter code: E3 ubiquitin-protein transferase MAEA (396 aa).

Residues 121 to 153 (KKKRMDRMMVEHLLRCGYYNTAVKLARQSEIED) enclose the LisH domain. One can recognise a CTLH domain in the interval 159–216 (MFLTAKEVEESLERQETMTCLAWCHDNKSRLRKMKSCLEFSLRIQEFIELIRQNKRLD). An RING-Gid-type zinc finger spans residues 314-381 (CPVCSKSLNK…QDDKVVCPRT (68 aa)).

As to quaternary structure, identified in the CTLH complex that contains at least MAEA, RMND5A, GID8, WDR26, and RANBP9 and/or RANBP10 as the catalytic core. Interacts with F-actin.

The protein localises to the nucleus matrix. It localises to the cell membrane. Its subcellular location is the cytoplasm. It is found in the cytoskeleton. It carries out the reaction S-ubiquitinyl-[E2 ubiquitin-conjugating enzyme]-L-cysteine + [acceptor protein]-L-lysine = [E2 ubiquitin-conjugating enzyme]-L-cysteine + N(6)-ubiquitinyl-[acceptor protein]-L-lysine.. In terms of biological role, core component of the CTLH E3 ubiquitin-protein ligase complex that selectively accepts ubiquitin from UBE2H and mediates ubiquitination and subsequent proteasomal degradation of the transcription factor HBP1. MAEA and RMND5A are both required for catalytic activity of the CTLH E3 ubiquitin-protein ligase complex. MAEA is required for normal cell proliferation. The CTLH E3 ubiquitin-protein ligase complex is not required for the degradation of enzymes involved in gluconeogenesis, such as FBP1. Plays a role in erythroblast maturation and in the development of mature macrophages. Mediates the attachment of erythroid cell to mature macrophages; this MAEA-mediated contact inhibits erythroid cell apoptosis. Participates in erythroblastic island formation, which is the functional unit of definitive erythropoiesis. Associates with F-actin to regulate actin distribution in erythroblasts and macrophages. May contribute to nuclear architecture and cells division events. In Xenopus laevis (African clawed frog), this protein is E3 ubiquitin-protein transferase MAEA (maea).